Reading from the N-terminus, the 415-residue chain is Tyrosine--tRNA ligase (415 aa).

L-tyrosine is bound at residue Y33. The short motif at 38–47 is the 'HIGH' region element; sequence PSGESLHLGN. L-tyrosine is bound by residues Y161 and Q165. The 'KMSKS' region signature appears at 225–229; sequence KFGKS. K228 lines the ATP pocket. Residues 350-414 enclose the S4 RNA-binding domain; that stretch reads MVIDFLLQAK…KKNYFIVVWK (65 aa).

It belongs to the class-I aminoacyl-tRNA synthetase family. TyrS type 1 subfamily. As to quaternary structure, homodimer.

It localises to the cytoplasm. It catalyses the reaction tRNA(Tyr) + L-tyrosine + ATP = L-tyrosyl-tRNA(Tyr) + AMP + diphosphate + H(+). In terms of biological role, catalyzes the attachment of tyrosine to tRNA(Tyr) in a two-step reaction: tyrosine is first activated by ATP to form Tyr-AMP and then transferred to the acceptor end of tRNA(Tyr). This is Tyrosine--tRNA ligase from Mycoplasmoides gallisepticum (strain R(low / passage 15 / clone 2)) (Mycoplasma gallisepticum).